Reading from the N-terminus, the 281-residue chain is Thioesterase PikA5 (281 aa).

The thioesterase stretch occupies residues 26 to 249 (RLVCLPHAGG…WHEICNDISD (224 aa)). Catalysis depends on serine 99, which acts as the Nucleophile; for thioesterase activity. Histidine 233 acts as the Proton acceptor; for thioesterase activity in catalysis.

The protein belongs to the thioesterase family.

Its pathway is antibiotic biosynthesis. Functionally, involved in the biosynthesis of 12- and 14-membered ring macrolactone antibiotics such as methymycin, neomethymycin, narbomycin and pikromycin. Responsible for removing mis-formed acyl moieties (aberrant decarboxylation) that are bound to the PKS and could block it. Catalyzes the cleavage of methylmalonyl-[acp]. It exhibits some acyl-group specificity, and catalyzes the cleavage of propionyl and butyryl derivatives faster than acetyl malonyl or methylmalonyl derivatives. This Streptomyces venezuelae protein is Thioesterase PikA5.